A 132-amino-acid polypeptide reads, in one-letter code: Small ribosomal subunit protein uS8 (132 aa).

It belongs to the universal ribosomal protein uS8 family. As to quaternary structure, part of the 30S ribosomal subunit. Contacts proteins S5 and S12.

In terms of biological role, one of the primary rRNA binding proteins, it binds directly to 16S rRNA central domain where it helps coordinate assembly of the platform of the 30S subunit. The chain is Small ribosomal subunit protein uS8 from Rickettsia canadensis (strain McKiel).